Here is a 515-residue protein sequence, read N- to C-terminus: Maturase K (515 aa).

Belongs to the intron maturase 2 family. MatK subfamily.

The protein resides in the plastid. Its subcellular location is the chloroplast. Its function is as follows. Usually encoded in the trnK tRNA gene intron. Probably assists in splicing its own and other chloroplast group II introns. The chain is Maturase K from Pinus contorta (Shore pine).